The following is a 938-amino-acid chain: Isoleucine--tRNA ligase (938 aa).

A 'HIGH' region motif is present at residues 58–68; it reads PYANGNIHIGH. Glu-561 is a binding site for L-isoleucyl-5'-AMP. A 'KMSKS' region motif is present at residues 602 to 606; the sequence is KMSKS. An ATP-binding site is contributed by Lys-605. Positions 901, 904, 921, and 924 each coordinate Zn(2+).

Belongs to the class-I aminoacyl-tRNA synthetase family. IleS type 1 subfamily. In terms of assembly, monomer. The cofactor is Zn(2+).

The protein localises to the cytoplasm. It catalyses the reaction tRNA(Ile) + L-isoleucine + ATP = L-isoleucyl-tRNA(Ile) + AMP + diphosphate. Functionally, catalyzes the attachment of isoleucine to tRNA(Ile). As IleRS can inadvertently accommodate and process structurally similar amino acids such as valine, to avoid such errors it has two additional distinct tRNA(Ile)-dependent editing activities. One activity is designated as 'pretransfer' editing and involves the hydrolysis of activated Val-AMP. The other activity is designated 'posttransfer' editing and involves deacylation of mischarged Val-tRNA(Ile). This Yersinia pseudotuberculosis serotype O:1b (strain IP 31758) protein is Isoleucine--tRNA ligase.